The sequence spans 315 residues: 4-hydroxy-3-methylbut-2-enyl diphosphate reductase (315 aa).

Residue C12 participates in [4Fe-4S] cluster binding. Residues H41 and H74 each contribute to the (2E)-4-hydroxy-3-methylbut-2-enyl diphosphate site. Residues H41 and H74 each contribute to the dimethylallyl diphosphate site. The isopentenyl diphosphate site is built by H41 and H74. C96 is a binding site for [4Fe-4S] cluster. H124 is a (2E)-4-hydroxy-3-methylbut-2-enyl diphosphate binding site. H124 lines the dimethylallyl diphosphate pocket. H124 provides a ligand contact to isopentenyl diphosphate. The Proton donor role is filled by E126. T168 contributes to the (2E)-4-hydroxy-3-methylbut-2-enyl diphosphate binding site. C198 contributes to the [4Fe-4S] cluster binding site. 4 residues coordinate (2E)-4-hydroxy-3-methylbut-2-enyl diphosphate: S226, S227, N228, and S270. S226, S227, N228, and S270 together coordinate dimethylallyl diphosphate. Positions 226, 227, 228, and 270 each coordinate isopentenyl diphosphate.

This sequence belongs to the IspH family. The cofactor is [4Fe-4S] cluster.

It catalyses the reaction isopentenyl diphosphate + 2 oxidized [2Fe-2S]-[ferredoxin] + H2O = (2E)-4-hydroxy-3-methylbut-2-enyl diphosphate + 2 reduced [2Fe-2S]-[ferredoxin] + 2 H(+). It carries out the reaction dimethylallyl diphosphate + 2 oxidized [2Fe-2S]-[ferredoxin] + H2O = (2E)-4-hydroxy-3-methylbut-2-enyl diphosphate + 2 reduced [2Fe-2S]-[ferredoxin] + 2 H(+). It functions in the pathway isoprenoid biosynthesis; dimethylallyl diphosphate biosynthesis; dimethylallyl diphosphate from (2E)-4-hydroxy-3-methylbutenyl diphosphate: step 1/1. Its pathway is isoprenoid biosynthesis; isopentenyl diphosphate biosynthesis via DXP pathway; isopentenyl diphosphate from 1-deoxy-D-xylulose 5-phosphate: step 6/6. Its function is as follows. Catalyzes the conversion of 1-hydroxy-2-methyl-2-(E)-butenyl 4-diphosphate (HMBPP) into a mixture of isopentenyl diphosphate (IPP) and dimethylallyl diphosphate (DMAPP). Acts in the terminal step of the DOXP/MEP pathway for isoprenoid precursor biosynthesis. The sequence is that of 4-hydroxy-3-methylbut-2-enyl diphosphate reductase from Pseudomonas fluorescens (strain ATCC BAA-477 / NRRL B-23932 / Pf-5).